Consider the following 72-residue polypeptide: Translation initiation factor IF-1 (72 aa).

Residues 1-72 (MSKDDVIEMQ…TRGRITWRAK (72 aa)) form the S1-like domain.

The protein belongs to the IF-1 family. As to quaternary structure, component of the 30S ribosomal translation pre-initiation complex which assembles on the 30S ribosome in the order IF-2 and IF-3, IF-1 and N-formylmethionyl-tRNA(fMet); mRNA recruitment can occur at any time during PIC assembly.

It is found in the cytoplasm. Its function is as follows. One of the essential components for the initiation of protein synthesis. Stabilizes the binding of IF-2 and IF-3 on the 30S subunit to which N-formylmethionyl-tRNA(fMet) subsequently binds. Helps modulate mRNA selection, yielding the 30S pre-initiation complex (PIC). Upon addition of the 50S ribosomal subunit IF-1, IF-2 and IF-3 are released leaving the mature 70S translation initiation complex. This chain is Translation initiation factor IF-1, found in Clostridium kluyveri (strain ATCC 8527 / DSM 555 / NBRC 12016 / NCIMB 10680 / K1).